The following is a 138-amino-acid chain: ATP synthase epsilon chain (138 aa).

The protein belongs to the ATPase epsilon chain family. As to quaternary structure, F-type ATPases have 2 components, CF(1) - the catalytic core - and CF(0) - the membrane proton channel. CF(1) has five subunits: alpha(3), beta(3), gamma(1), delta(1), epsilon(1). CF(0) has three main subunits: a, b and c.

The protein localises to the cell membrane. Its function is as follows. Produces ATP from ADP in the presence of a proton gradient across the membrane. The chain is ATP synthase epsilon chain from Streptococcus pyogenes serotype M3 (strain ATCC BAA-595 / MGAS315).